The primary structure comprises 119 residues: uncharacterized protein (119 aa).

This is an uncharacterized protein from Schizosaccharomyces pombe (strain 972 / ATCC 24843) (Fission yeast).